Reading from the N-terminus, the 1010-residue chain is Probable LRR receptor-like serine/threonine-protein kinase At3g47570 (1010 aa).

The signal sequence occupies residues 1–19 (MRLFLLLAFNALMLLETHG). Residues 20 to 645 (FTDETDRQAL…SSRLKKVVIG (626 aa)) are Extracellular-facing. N-linked (GlcNAc...) asparagine glycosylation is found at Asn-48 and Asn-88. 10 LRR repeats span residues 89-113 (LSFL…VGQL), 114-137 (SRLE…LYNC), 139-161 (RLLN…LGSL), 162-185 (TNLV…LGNL), 186-209 (TLLE…VAQL), 211-233 (QIWS…LYNL), 234-258 (SSLK…GILL), 259-282 (PNLL…LSNI), 283-307 (STLE…NVPN), and 310-333 (LLFL…TSLT). Residue Asn-136 is glycosylated (N-linked (GlcNAc...) asparagine). An N-linked (GlcNAc...) asparagine glycan is attached at Asn-184. Residues Asn-221 and Asn-232 are each glycosylated (N-linked (GlcNAc...) asparagine). 2 N-linked (GlcNAc...) asparagine glycosylation sites follow: Asn-281 and Asn-294. 2 N-linked (GlcNAc...) asparagine glycosylation sites follow: Asn-334 and Asn-358. LRR repeat units follow at residues 335–359 (CTQL…IANL), 361–384 (AKLV…IGNL), 385–408 (INLQ…LGKL), 410–432 (NLRY…IGNM), 433–455 (TMLE…SLGN), 457–480 (SHLL…IMKI), 481–504 (QQLL…IGAL), 505–528 (QNLG…LGNC), 530–551 (TMES…LKGL), 552–574 (VGVK…YFAS), and 575–600 (FSKL…IFEN). N-linked (GlcNAc...) asparagine glycans are attached at residues Asn-431, Asn-455, and Asn-470. 2 N-linked (GlcNAc...) asparagine glycosylation sites follow: Asn-582 and Asn-600. Residues 646–666 (VSVGITLLLLLFMASVTLIWL) form a helical membrane-spanning segment. Topologically, residues 667 to 1010 (RKRKKNKETN…FFKASRTTWR (344 aa)) are cytoplasmic. Position 699 is a phosphothreonine (Thr-699). Residues 702-1002 (FSSSNMVGSG…ELISIRERFF (301 aa)) form the Protein kinase domain. ATP contacts are provided by residues 708–716 (VGSGSFGTV) and Lys-731. A phosphotyrosine mark is found at Tyr-781 and Tyr-826. The Proton acceptor role is filled by Asp-839. A Phosphotyrosine modification is found at Tyr-887.

Belongs to the protein kinase superfamily. Ser/Thr protein kinase family.

The protein localises to the cell membrane. The catalysed reaction is L-seryl-[protein] + ATP = O-phospho-L-seryl-[protein] + ADP + H(+). The enzyme catalyses L-threonyl-[protein] + ATP = O-phospho-L-threonyl-[protein] + ADP + H(+). The sequence is that of Probable LRR receptor-like serine/threonine-protein kinase At3g47570 from Arabidopsis thaliana (Mouse-ear cress).